Here is a 470-residue protein sequence, read N- to C-terminus: Desmin (470 aa).

The interval 2-108 (SQAYSSSQRV…QEFLTTRTNE (107 aa)) is head. Phosphoserine; by CDK1 is present on S7. Phosphoserine; by AURKB is present on S12. R16 carries the omega-N-methylarginine modification. Residue T17 is modified to Phosphothreonine; by AURKB and ROCK1. S28 is subject to Phosphoserine; by CDK1. At S31 the chain carries Phosphoserine. S32 carries the phosphoserine; by CDK1 modification. An Asymmetric dimethylarginine; alternate modification is found at R37. R37 is modified (omega-N-methylarginine; alternate). A Phosphoserine modification is found at S45. ADP-ribosylarginine is present on R58. At S60 the chain carries Phosphoserine; by AURKB. An Omega-N-methylarginine modification is found at R70. T77 carries the post-translational modification Phosphothreonine; by ROCK1. Position 81 is a phosphoserine (S81). The IF rod domain maps to 108–416 (EKVELQELND…KLLEGEESRI (309 aa)). The interval 109-141 (KVELQELNDRFANYIEKVRFLEQQNAALAAEVN) is coil 1A. The segment at 142 to 151 (RLKGREPTRV) is linker 1. The interval 152 to 252 (AEIYEEELRE…HEEEIRELQA (101 aa)) is coil 1B. The segment at 253–268 (QLQEQQVQVEMDMSKP) is linker 12. Positions 268–415 (PDLTAALRDI…RKLLEGEESR (148 aa)) are interaction with NEB. The segment at 269-287 (DLTAALRDIRAQYETIAAK) is coil 2A. The tract at residues 288-295 (NISEAEEW) is linker 2. S290, S358, S361, and S424 each carry phosphoserine. Positions 296–412 (YKSKVSDLTQ…ATYRKLLEGE (117 aa)) are coil 2B. The tract at residues 413–470 (ESRINLPIQTFSALNFRETSPEQRGSEVHTKKTVMIKTIETRDGEVVSEATQQQHEVL) is tail. The tract at residues 438–453 (SEVHTKKTVMIKTIET) is interaction with CRYAB.

Belongs to the intermediate filament family. In terms of assembly, homomer. Interacts with DST. Interacts with MTM1. Interacts with EPPK1; interaction is dependent of higher-order structure of intermediate filament. Interacts with CRYAB. Interacts with NEB (via nebulin repeats 160-164). Interacts (via rod region) with NEBL (via nebulin repeats 1-5). Interacts with ASB2; the interaction targets DES for proteasomal degradation. Interacts with PKP1. Interacts with FLII. ADP-ribosylation prevents ability to form intermediate filaments. Post-translationally, phosphorylation at Ser-7, Ser-28 and Ser-32 by CDK1 and phosphorylation at Ser-60 by AURKB contribute to efficient separation of desmin intermediate filaments during mitosis. In terms of processing, ubiquitination by a SCF-like complex containing ASB2 leads to proteasomal degradation.

The protein resides in the cytoplasm. The protein localises to the myofibril. Its subcellular location is the sarcomere. It is found in the z line. It localises to the cell membrane. The protein resides in the sarcolemma. The protein localises to the nucleus. Its subcellular location is the cell tip. It is found in the nucleus envelope. Muscle-specific type III intermediate filament essential for proper muscular structure and function. Plays a crucial role in maintaining the structure of sarcomeres, inter-connecting the Z-disks and forming the myofibrils, linking them not only to the sarcolemmal cytoskeleton, but also to the nucleus and mitochondria, thus providing strength for the muscle fiber during activity. In adult striated muscle they form a fibrous network connecting myofibrils to each other and to the plasma membrane from the periphery of the Z-line structures. May act as a sarcomeric microtubule-anchoring protein: specifically associates with detyrosinated tubulin-alpha chains, leading to buckled microtubules and mechanical resistance to contraction. Required for nuclear membrane integrity, via anchoring at the cell tip and nuclear envelope, resulting in maintenance of microtubule-derived intracellular mechanical forces. Contributes to the transcriptional regulation of the NKX2-5 gene in cardiac progenitor cells during a short period of cardiomyogenesis and in cardiac side population stem cells in the adult. Plays a role in maintaining an optimal conformation of nebulette (NEB) on heart muscle sarcomeres to bind and recruit cardiac alpha-actin. The sequence is that of Desmin (DES) from Bos taurus (Bovine).